Reading from the N-terminus, the 99-residue chain is Large ribosomal subunit protein eL30 (99 aa).

Belongs to the eukaryotic ribosomal protein eL30 family.

This is Large ribosomal subunit protein eL30 (rpl30e) from Pyrococcus horikoshii (strain ATCC 700860 / DSM 12428 / JCM 9974 / NBRC 100139 / OT-3).